Consider the following 506-residue polypeptide: Sodium-coupled neutral amino acid symporter 2 (506 aa).

The disordered stretch occupies residues 1 to 23; the sequence is MKKAEMGRFSISPDEDSSSYSSN. Residues 1-76 lie on the Cytoplasmic side of the membrane; it reads MKKAEMGRFS…HPGTTSFGMS (76 aa). The segment at 1 to 96 is regulates protein turnover upon amino acid deprivation; sequence MKKAEMGRFS…SGILGLSYAM (96 aa). 5 positions are modified to phosphoserine: Ser10, Ser12, Ser21, Ser22, and Ser55. Residues 77–96 form a helical membrane-spanning segment; that stretch reads VFNLSNAIVGSGILGLSYAM. Asn82 lines the Na(+) pocket. Topologically, residues 97-102 are extracellular; that stretch reads ANTGIA. The helical transmembrane segment at 103–123 threads the bilayer; sequence LFIILLTFVSIFSLYSVHLLL. Over 124–158 the chain is Cytoplasmic; that stretch reads KTANEGGSLLYEQLGYKAFGLVGKLAASGSITMQN. Residues 159 to 177 form a helical membrane-spanning segment; sequence IGAMSSYLFIVKYELPLVI. Topologically, residues 178 to 188 are extracellular; it reads QALTNIEDKTG. The helical transmembrane segment at 189 to 209 threads the bilayer; the sequence is LWYLNGNYLVLLVSLVVILPL. Topologically, residues 210–217 are cytoplasmic; the sequence is SLFRNLGY. The helical transmembrane segment at 218–238 threads the bilayer; sequence LGYTSGLSLLCMVFFLIVVIC. The Extracellular segment spans residues 239-292; that stretch reads KKFQVPCPVEAALIINETINTTLTQPTALVPALSHNVTENDSCRPHYFIFNSQT. Residues Cys245 and Cys281 are joined by a disulfide bond. N-linked (GlcNAc...) asparagine glycosylation is found at Asn258 and Asn274. The helical transmembrane segment at 293 to 313 threads the bilayer; the sequence is VYAVPILIFSFVCHPAVLPIY. Residues 314-329 are Cytoplasmic-facing; it reads EELKDRSRRRMMNVSK. The helical transmembrane segment at 330 to 350 threads the bilayer; that stretch reads ISFFAMFLMYLLAALFGYLTF. Residues 351-371 lie on the Extracellular side of the membrane; it reads YEHVESELLHTYSSILGTDIL. The chain crosses the membrane as a helical span at residues 372–392; the sequence is LLIVRLAVLMAVTLTVPVVIF. Residue Thr386 participates in Na(+) binding. At 393–413 the chain is on the cytoplasmic side; that stretch reads PIRSSVTHLLCASKDFSWWRH. Residues 414 to 434 form a helical membrane-spanning segment; sequence SLITVSILAFTNLLVIFVPTI. Residues 435-436 are Extracellular-facing; sequence RD. Residues 437 to 457 form a helical membrane-spanning segment; that stretch reads IFGFIGASAASMLIFILPSAF. At 458-472 the chain is on the cytoplasmic side; the sequence is YIKLVKKEPMKSVQK. Residues 473-495 traverse the membrane as a helical segment; sequence IGALFFLLSGVLVMTGSMALIVL. Topologically, residues 496 to 506 are extracellular; the sequence is DWVHNAPGGGH.

The protein belongs to the amino acid/polyamine transporter 2 family. Post-translationally, polyubiquitination by NEDD4L regulates the degradation and the activity of SLC38A2. As to expression, ubiquitously expressed. Expressed in neocortex. Widely expressed in the central nervous system with higher concentrations in caudal regions. Expressed by glutamatergic and GABAergic neurons together with astrocytes and other non-neuronal cells in the cerebral cortex (at protein level).

It is found in the cell membrane. The catalysed reaction is L-alanine(in) + Na(+)(in) = L-alanine(out) + Na(+)(out). It catalyses the reaction glycine(in) + Na(+)(in) = glycine(out) + Na(+)(out). It carries out the reaction L-serine(in) + Na(+)(in) = L-serine(out) + Na(+)(out). The enzyme catalyses L-proline(in) + Na(+)(in) = L-proline(out) + Na(+)(out). The catalysed reaction is L-methionine(in) + Na(+)(in) = L-methionine(out) + Na(+)(out). It catalyses the reaction L-histidine(in) + Na(+)(in) = L-histidine(out) + Na(+)(out). It carries out the reaction L-asparagine(in) + Na(+)(in) = L-asparagine(out) + Na(+)(out). The enzyme catalyses L-glutamine(in) + Na(+)(in) = L-glutamine(out) + Na(+)(out). The catalysed reaction is L-threonine(in) + Na(+)(in) = L-threonine(out) + Na(+)(out). It catalyses the reaction L-leucine(in) + Na(+)(in) = L-leucine(out) + Na(+)(out). It carries out the reaction L-phenylalanine(in) + Na(+)(in) = L-phenylalanine(out) + Na(+)(out). Inhibited by N-methyl-D-glucamine. Inhibited by choline. Allosteric regulation of sodium ions binding by pH. Its function is as follows. Symporter that cotransports neutral amino acids and sodium ions from the extracellular to the intracellular side of the cell membrane. The transport is pH-sensitive, Li(+)-intolerant, electrogenic, driven by the Na(+) electrochemical gradient and cotransports of neutral amino acids and sodium ions with a stoichiometry of 1:1. May function in the transport of amino acids at the blood-brain barrier. May function in the transport of amino acids in the supply of maternal nutrients to the fetus through the placenta. Maintains a key metabolic glutamine/glutamate balance underpinning retrograde signaling by dendritic release of the neurotransmitter glutamate. Transports L-proline in differentiating osteoblasts for the efficient synthesis of proline-enriched proteins and provides proline essential for osteoblast differentiation and bone formation during bone development. This Homo sapiens (Human) protein is Sodium-coupled neutral amino acid symporter 2.